Here is a 199-residue protein sequence, read N- to C-terminus: Inner membrane-spanning protein YciB (199 aa).

6 helical membrane-spanning segments follow: residues 7–27 (HPLFKLATELGPLLVFFAANA), 32–52 (FVATAAFMVAIVAAMIASYVV), 56–76 (IPLMALVTGIVVIVFGTLTLV), 93–113 (LFAGVLGGGLLFGRSFIAIMF), 126–146 (VLTLRWALFFFGMAILNELIW), and 153–173 (FWVNFKVFGAVPLTMIFAMMQ).

The protein belongs to the YciB family.

The protein resides in the cell inner membrane. In terms of biological role, plays a role in cell envelope biogenesis, maintenance of cell envelope integrity and membrane homeostasis. The polypeptide is Inner membrane-spanning protein YciB (Nitrobacter hamburgensis (strain DSM 10229 / NCIMB 13809 / X14)).